A 116-amino-acid chain; its full sequence is Ribosome-binding factor A (116 aa).

It belongs to the RbfA family. In terms of assembly, monomer. Binds 30S ribosomal subunits, but not 50S ribosomal subunits or 70S ribosomes.

Its subcellular location is the cytoplasm. In terms of biological role, one of several proteins that assist in the late maturation steps of the functional core of the 30S ribosomal subunit. Associates with free 30S ribosomal subunits (but not with 30S subunits that are part of 70S ribosomes or polysomes). Required for efficient processing of 16S rRNA. May interact with the 5'-terminal helix region of 16S rRNA. The protein is Ribosome-binding factor A of Streptococcus mutans serotype c (strain ATCC 700610 / UA159).